Consider the following 116-residue polypeptide: CDKN2AIP N-terminal-like protein (116 aa).

Methionine 1 carries the post-translational modification N-acetylmethionine. Residues 24–116 (AEQFRSYSES…RSELMKKHQS (93 aa)) form the XRN2-binding (XTBD) domain.

This sequence belongs to the CARF family. As to quaternary structure, interacts with XRN2; the interaction is direct.

The protein is CDKN2AIP N-terminal-like protein (CDKN2AIPNL) of Bos taurus (Bovine).